We begin with the raw amino-acid sequence, 131 residues long: Small ribosomal subunit protein uS11 (131 aa).

Belongs to the universal ribosomal protein uS11 family. As to quaternary structure, part of the 30S ribosomal subunit. Interacts with proteins S7 and S18. Binds to IF-3.

Located on the platform of the 30S subunit, it bridges several disparate RNA helices of the 16S rRNA. Forms part of the Shine-Dalgarno cleft in the 70S ribosome. In Helicobacter acinonychis (strain Sheeba), this protein is Small ribosomal subunit protein uS11.